A 442-amino-acid chain; its full sequence is Histidine--tRNA ligase (442 aa).

The protein belongs to the class-II aminoacyl-tRNA synthetase family. In terms of assembly, homodimer.

The protein resides in the cytoplasm. It carries out the reaction tRNA(His) + L-histidine + ATP = L-histidyl-tRNA(His) + AMP + diphosphate + H(+). The sequence is that of Histidine--tRNA ligase from Helicobacter acinonychis (strain Sheeba).